The chain runs to 619 residues: 4-hydroxyphenylalkanoate adenylyltransferase (619 aa).

Belongs to the ATP-dependent AMP-binding enzyme family.

The catalysed reaction is 17-(4-hydroxyphenyl)heptadecanoate + holo-[(phenol)carboxyphthiodiolenone synthase] + ATP = 17-(4-hydroxyphenyl)heptadecanoyl-[(phenol)carboxyphthiodiolenone synthase] + AMP + diphosphate. It carries out the reaction 19-(4-hydroxyphenyl)nonadecanoate + holo-[(phenol)carboxyphthiodiolenone synthase] + ATP = 19-(4-hydroxyphenyl)nonadecanoyl-[(phenol)carboxyphthiodiolenone synthase] + AMP + diphosphate. The protein operates within lipid metabolism; fatty acid biosynthesis. Its function is as follows. Catalyzes the activation of long-chain fatty acids as acyl-adenylates (acyl-AMP), which are then transferred to the multifunctional polyketide synthase PpsA for further chain extension. Involved in the biosynthesis of phenolphthiocerol, which is an important intermediate in the biosynthesis of phenolic glycolipid (PGL), also called mycosid B. This chain is 4-hydroxyphenylalkanoate adenylyltransferase (fadD29), found in Mycobacterium bovis (strain ATCC BAA-935 / AF2122/97).